Reading from the N-terminus, the 418-residue chain is Sialidase-3 (418 aa).

The FRIP motif signature appears at 24–27 (YRIP). 2 residues coordinate substrate: Arg-25 and Arg-45. Asp-50 functions as the Proton acceptor in the catalytic mechanism. The stretch at 129-140 (LCSEDAGCSWGE) is one BNR 1 repeat. Tyr-179 and Tyr-181 together coordinate substrate. One copy of the BNR 2 repeat lies at 203–214 (SDDFGVTWHHGK). Substrate contacts are provided by Glu-223 and Arg-243. The BNR 3 repeat unit spans residues 254-265 (STDSGGCFQKPT). Ser-312 is modified (phosphoserine). Arg-339 provides a ligand contact to substrate. The Nucleophile role is filled by Tyr-369. Glu-386 is an active-site residue.

It belongs to the glycosyl hydrolase 33 family. Interacts with CAV1; this interaction enhances NEU3 sialidase activity within caveola. Interacts with EGFR; this interaction mediates desialylation of EGFR and enhances downstream signaling. Post-translationally, palmitoylated; may regulate intracellular trafficking and anchorage to plasma membrane and endomembranes. Expressed in heart, brain and cerebral cortex.

Its subcellular location is the cell membrane. The protein localises to the membrane. It localises to the caveola. The protein resides in the early endosome membrane. It is found in the recycling endosome membrane. Its subcellular location is the lysosome membrane. The catalysed reaction is Hydrolysis of alpha-(2-&gt;3)-, alpha-(2-&gt;6)-, alpha-(2-&gt;8)- glycosidic linkages of terminal sialic acid residues in oligosaccharides, glycoproteins, glycolipids, colominic acid and synthetic substrates.. It catalyses the reaction a ganglioside GD1a + H2O = a ganglioside GM1 + N-acetylneuraminate. The enzyme catalyses a ganglioside GD1a (d18:1(4E)) + H2O = a ganglioside GM1 (d18:1(4E)) + N-acetylneuraminate. It carries out the reaction a ganglioside GD1b + H2O = a ganglioside GM1 + N-acetylneuraminate. The catalysed reaction is a ganglioside GD1b (d18:1(4E)) + H2O = a ganglioside GM1 (d18:1(4E)) + N-acetylneuraminate. It catalyses the reaction a ganglioside GD3 + H2O = a ganglioside GM3 + N-acetylneuraminate. The enzyme catalyses a ganglioside GD3 (d18:1(4E)) + H2O = a ganglioside GM3 (d18:1(4E)) + N-acetylneuraminate. It carries out the reaction a ganglioside GM3 + H2O = a beta-D-galactosyl-(1-&gt;4)-beta-D-glucosyl-(1&lt;-&gt;1)-ceramide + N-acetylneuraminate. The catalysed reaction is a ganglioside GM1 + H2O = a ganglioside GA1 + N-acetylneuraminate. It catalyses the reaction a ganglioside GM1 (d18:1(4E)) + H2O = a ganglioside GA1 (d18:1(4E)) + N-acetylneuraminate. The enzyme catalyses a ganglioside GM2 (d18:1(4E)) + H2O = a ganglioside GA2 (d18:1(4E)) + N-acetylneuraminate. It carries out the reaction a ganglioside GM3 (d18:1(4E)) + H2O = a beta-D-Gal-(1-&gt;4)-beta-D-Glc-(1&lt;-&gt;1)-Cer(d18:1(4E)) + N-acetylneuraminate. The catalysed reaction is a ganglioside GT1b + H2O = a ganglioside GD1b + N-acetylneuraminate. Functionally, exo-alpha-sialidase that catalyzes the hydrolytic cleavage of the terminal sialic acid (N-acetylneuraminic acid, Neu5Ac) of a glycan moiety in the catabolism of glycolipids, glycoproteins and oligosacharides. Displays high catalytic efficiency for gangliosides including alpha-(2-&gt;3)-sialylated GD1a and GM3 and alpha-(2-&gt;8)-sialylated GD3. Plays a role in the regulation of transmembrane signaling through the modulation of ganglioside content of the lipid bilayer and by direct interaction with signaling receptors, such as EGFR. Desialylates EGFR and activates downstream signaling in proliferating cells. Contributes to clathrin-mediated endocytosis by regulating sorting of endocytosed receptors to early and recycling endosomes. The sequence is that of Sialidase-3 (Neu3) from Mus musculus (Mouse).